A 415-amino-acid chain; its full sequence is Nuclear hormone receptor family member nhr-153 (415 aa).

The segment at residues 26–105 (PSVCQICRNP…AGMNPMAIQA (80 aa)) is a DNA-binding region (nuclear receptor). NR C4-type zinc fingers lie at residues 29 to 49 (CQIC…CNGC) and 65 to 88 (CFKV…CRAC). An NR LBD domain is found at 170–406 (DQRDLSTALS…DPEVLKKKCI (237 aa)).

The protein belongs to the nuclear hormone receptor family.

It is found in the nucleus. Orphan nuclear receptor. This Caenorhabditis elegans protein is Nuclear hormone receptor family member nhr-153 (nhr-153).